We begin with the raw amino-acid sequence, 606 residues long: Pentatricopeptide repeat-containing protein At1g31920 (606 aa).

9 PPR repeats span residues C96–P130, D131–A165, D166–S200, W201–E227, E233–N263, N268–R298, N299–P333, D334–E368, and T370–V404. The type E motif stretch occupies residues I405–K480. The interval G481–K511 is type E(+) motif. The segment at F512–W606 is type DYW motif.

The protein belongs to the PPR family. PCMP-H subfamily.

This chain is Pentatricopeptide repeat-containing protein At1g31920 (PCMP-H11), found in Arabidopsis thaliana (Mouse-ear cress).